Reading from the N-terminus, the 207-residue chain is BON1-associated protein 2 (207 aa).

The C2 domain occupies Met-1–Phe-112.

In terms of assembly, interacts with BON1, BON2 and BON3. As to expression, expressed in roots, leaves, stems and flowers.

It localises to the membrane. Functionally, negative regulator of cell death and defense responses. Exhibits calcium-dependent phospholipid binding properties. The sequence is that of BON1-associated protein 2 (BAP2) from Arabidopsis thaliana (Mouse-ear cress).